Reading from the N-terminus, the 119-residue chain is Large ribosomal subunit protein uL22 (119 aa).

Belongs to the universal ribosomal protein uL22 family. As to quaternary structure, part of the 50S ribosomal subunit.

In terms of biological role, this protein binds specifically to 23S rRNA; its binding is stimulated by other ribosomal proteins, e.g. L4, L17, and L20. It is important during the early stages of 50S assembly. It makes multiple contacts with different domains of the 23S rRNA in the assembled 50S subunit and ribosome. Its function is as follows. The globular domain of the protein is located near the polypeptide exit tunnel on the outside of the subunit, while an extended beta-hairpin is found that lines the wall of the exit tunnel in the center of the 70S ribosome. In Rickettsia akari (strain Hartford), this protein is Large ribosomal subunit protein uL22.